Reading from the N-terminus, the 941-residue chain is Isoleucine--tRNA ligase (941 aa).

The 'HIGH' region signature appears at Pro58–His68. Glu562 lines the L-isoleucyl-5'-AMP pocket. The 'KMSKS' region motif lies at Lys603–Ser607. Lys606 serves as a coordination point for ATP. Cys904, Cys907, Cys924, and Cys927 together coordinate Zn(2+).

The protein belongs to the class-I aminoacyl-tRNA synthetase family. IleS type 1 subfamily. Monomer. Zn(2+) is required as a cofactor.

The protein localises to the cytoplasm. It catalyses the reaction tRNA(Ile) + L-isoleucine + ATP = L-isoleucyl-tRNA(Ile) + AMP + diphosphate. Catalyzes the attachment of isoleucine to tRNA(Ile). As IleRS can inadvertently accommodate and process structurally similar amino acids such as valine, to avoid such errors it has two additional distinct tRNA(Ile)-dependent editing activities. One activity is designated as 'pretransfer' editing and involves the hydrolysis of activated Val-AMP. The other activity is designated 'posttransfer' editing and involves deacylation of mischarged Val-tRNA(Ile). In Alkalilimnicola ehrlichii (strain ATCC BAA-1101 / DSM 17681 / MLHE-1), this protein is Isoleucine--tRNA ligase.